The chain runs to 285 residues: Golgi phosphoprotein 3-like (285 aa).

Positions 1–43 (MTTLTHRTRRTEVSKSSEKKIESEEDTNQERSPDNEDPGDSKD) are disordered. Residues 10-43 (RTEVSKSSEKKIESEEDTNQERSPDNEDPGDSKD) show a composition bias toward basic and acidic residues. The a 1,2-diacyl-sn-glycero-3-phospho-(1D-myo-inositol 4-phosphate) site is built by Trp-67 and Arg-76. Ser-112 carries the phosphoserine modification. Residues Arg-157 and Arg-160 each coordinate a 1,2-diacyl-sn-glycero-3-phospho-(1D-myo-inositol 4-phosphate). Residues 176–187 (EKQNFLLFDMTT) form a beta-hairpin required for oligomerization region.

Belongs to the GOLPH3/VPS74 family. Homooligomer. Does not interact MYO18; differs from GOLPH3 by its inability to interact with MYO18. May interact with ARF1. As to expression, expressed in a subset of tissues tested with higher expression in salivary gland, small intestine and skin (at protein level).

The protein resides in the golgi apparatus. It localises to the golgi stack membrane. It is found in the trans-Golgi network membrane. Functionally, phosphatidylinositol-4-phosphate-binding protein that may antagonize the action of GOLPH3 which is required for the process of vesicle budding at the Golgi and anterograde transport to the plasma membrane. The chain is Golgi phosphoprotein 3-like (Golph3l) from Mus musculus (Mouse).